Here is a 213-residue protein sequence, read N- to C-terminus: N-(5'-phosphoribosyl)anthranilate isomerase (213 aa).

It belongs to the TrpF family.

The enzyme catalyses N-(5-phospho-beta-D-ribosyl)anthranilate = 1-(2-carboxyphenylamino)-1-deoxy-D-ribulose 5-phosphate. It functions in the pathway amino-acid biosynthesis; L-tryptophan biosynthesis; L-tryptophan from chorismate: step 3/5. This chain is N-(5'-phosphoribosyl)anthranilate isomerase, found in Leptospira interrogans serogroup Icterohaemorrhagiae serovar copenhageni (strain Fiocruz L1-130).